Consider the following 146-residue polypeptide: Protein phosphatase 1 regulatory subunit 14D (146 aa).

Polar residues predominate over residues 1-16; sequence MLSSSAASCTSPNPDT. Residues 1 to 57 form a disordered region; the sequence is MLSSSAASCTSPNPDTDNPDKKVRWSSEKRRRASSTDSESKTHLDISKLPRSRRPSR. Composition is skewed to basic and acidic residues over residues 18–28 and 38–48; these read NPDKKVRWSSE and SESKTHLDISK. Positions 21-25 are interaction with protein phosphatase 1; sequence KKVRW.

Belongs to the PP1 inhibitor family. Post-translationally, phosphorylated on several residues.

The protein resides in the cytoplasm. Functionally, inhibitor of PPP1CA. Has inhibitory activity only when phosphorylated, creating a molecular switch for regulating the phosphorylation status of PPP1CA substrates and smooth muscle contraction. The sequence is that of Protein phosphatase 1 regulatory subunit 14D (Ppp1r14d) from Rattus norvegicus (Rat).